Reading from the N-terminus, the 205-residue chain is MSKRASSKYKIDRRMGENIWGRPKSPVNRREYGPGQHGQRRKGKLSDFGVQLRAKQKLKGYYGDLREKQFRATYDEANRRKGDTSENLIGLLESRLDAIVYRAKFVPTVFAARQFVNHGHVSVNGVKVNIGSYRCKAGDVIEVRQKSKQLAIVLEATQLAERDVPDYIEVDHNKMVATFVRVPTLSDVPYAVIMEPQLVVEFYSR.

The disordered stretch occupies residues M1–S46. Residues S94–L154 form the S4 RNA-binding domain.

The protein belongs to the universal ribosomal protein uS4 family. Part of the 30S ribosomal subunit. Contacts protein S5. The interaction surface between S4 and S5 is involved in control of translational fidelity.

One of the primary rRNA binding proteins, it binds directly to 16S rRNA where it nucleates assembly of the body of the 30S subunit. Functionally, with S5 and S12 plays an important role in translational accuracy. The polypeptide is Small ribosomal subunit protein uS4 (Allorhizobium ampelinum (strain ATCC BAA-846 / DSM 112012 / S4) (Agrobacterium vitis (strain S4))).